The sequence spans 284 residues: 2-dehydro-3-deoxyphosphooctonate aldolase (284 aa).

It belongs to the KdsA family.

It is found in the cytoplasm. It carries out the reaction D-arabinose 5-phosphate + phosphoenolpyruvate + H2O = 3-deoxy-alpha-D-manno-2-octulosonate-8-phosphate + phosphate. Its pathway is carbohydrate biosynthesis; 3-deoxy-D-manno-octulosonate biosynthesis; 3-deoxy-D-manno-octulosonate from D-ribulose 5-phosphate: step 2/3. It participates in bacterial outer membrane biogenesis; lipopolysaccharide biosynthesis. This is 2-dehydro-3-deoxyphosphooctonate aldolase from Burkholderia multivorans (strain ATCC 17616 / 249).